Here is a 60-residue protein sequence, read N- to C-terminus: Cytotoxin 2 (60 aa).

Cystine bridges form between C3–C21, C14–C38, C42–C53, and C54–C59.

The protein belongs to the three-finger toxin family. Short-chain subfamily. Type IA cytotoxin sub-subfamily. As to quaternary structure, monomer in solution; Homodimer and oligomer in the presence of negatively charged lipids forming a pore with a size ranging between 20 and 30 Angstroms. As to expression, expressed by the venom gland.

Its subcellular location is the secreted. The protein localises to the target cell membrane. Functionally, shows cytolytic activity on many different cells by forming pore in lipid membranes. In vivo, increases heart rate or kills the animal by cardiac arrest. In addition, it binds to heparin with high affinity, interacts with Kv channel-interacting protein 1 (KCNIP1) in a calcium-independent manner, and binds to integrin alpha-V/beta-3 (ITGAV/ITGB3) with moderate affinity. This is Cytotoxin 2 from Naja nivea (Cape cobra).